A 301-amino-acid polypeptide reads, in one-letter code: 2-dehydropantoate 2-reductase (301 aa).

Residues 7–12, lysine 74, asparagine 99, and alanine 123 contribute to the NADP(+) site; that span reads GAGAIG. The Proton donor role is filled by lysine 179. Residues lysine 179, asparagine 183, asparagine 187, asparagine 197, and 246–249 each bind substrate; that span reads NYNS. Glutamate 261 provides a ligand contact to NADP(+).

It belongs to the ketopantoate reductase family.

The protein localises to the cytoplasm. The enzyme catalyses (R)-pantoate + NAD(+) = 2-dehydropantoate + NADH + H(+). It catalyses the reaction (R)-pantoate + NADP(+) = 2-dehydropantoate + NADPH + H(+). It participates in cofactor biosynthesis; coenzyme A biosynthesis. In terms of biological role, catalyzes the NAD(P)H-dependent reduction of ketopantoate into pantoic acid. The protein is 2-dehydropantoate 2-reductase of Pyrococcus horikoshii (strain ATCC 700860 / DSM 12428 / JCM 9974 / NBRC 100139 / OT-3).